The sequence spans 30 residues: Chassatide C9 (30 aa).

The segment at residues 1 to 30 is a cross-link (cyclopeptide (Gly-Asn)); the sequence is GIPCGESCVFIPCVTTVIGCSCKDKVCYNN. 3 disulfide bridges follow: Cys-4–Cys-20, Cys-8–Cys-22, and Cys-13–Cys-27.

Post-translationally, this is a cyclic peptide.

Functionally, probably participates in a plant defense mechanism. This is Chassatide C9 from Chassalia chartacea (Chassalia curviflora).